A 432-amino-acid chain; its full sequence is Putative D-alanyl-D-alanine carboxypeptidase (432 aa).

A helical; Signal-anchor membrane pass occupies residues 7–25 (ATVLLTFSLSAFAVEYPVL).

It belongs to the peptidase S12 family. YfeW subfamily.

It is found in the cell inner membrane. It carries out the reaction Preferential cleavage: (Ac)2-L-Lys-D-Ala-|-D-Ala. Also transpeptidation of peptidyl-alanyl moieties that are N-acyl substituents of D-alanine.. The chain is Putative D-alanyl-D-alanine carboxypeptidase from Salmonella enteritidis PT4 (strain P125109).